We begin with the raw amino-acid sequence, 115 residues long: Large ribosomal subunit protein bL19 (115 aa).

The protein belongs to the bacterial ribosomal protein bL19 family.

This protein is located at the 30S-50S ribosomal subunit interface and may play a role in the structure and function of the aminoacyl-tRNA binding site. The sequence is that of Large ribosomal subunit protein bL19 from Francisella tularensis subsp. tularensis (strain FSC 198).